Here is a 168-residue protein sequence, read N- to C-terminus: MSELIIGVDPGTIVAGYAIIAVEQRYQLRPYSYGAIRLSSDMPLPMRYKTLFEQLSGVLDDTQPNAMVLETQFVNKNPQSTMKLAMARGIVLLAAAQRDILIFEYAPNVAKKAVVGKGHASKRQVQVMVSKILNVPEVLHPSNEDIADAFALAICHTHVARSPLCGVR.

Residues aspartate 9, glutamate 70, and aspartate 145 contribute to the active site. Aspartate 9, glutamate 70, and aspartate 145 together coordinate Mg(2+).

It belongs to the RuvC family. In terms of assembly, homodimer which binds Holliday junction (HJ) DNA. The HJ becomes 2-fold symmetrical on binding to RuvC with unstacked arms; it has a different conformation from HJ DNA in complex with RuvA. In the full resolvosome a probable DNA-RuvA(4)-RuvB(12)-RuvC(2) complex forms which resolves the HJ. It depends on Mg(2+) as a cofactor.

The protein resides in the cytoplasm. It catalyses the reaction Endonucleolytic cleavage at a junction such as a reciprocal single-stranded crossover between two homologous DNA duplexes (Holliday junction).. Its function is as follows. The RuvA-RuvB-RuvC complex processes Holliday junction (HJ) DNA during genetic recombination and DNA repair. Endonuclease that resolves HJ intermediates. Cleaves cruciform DNA by making single-stranded nicks across the HJ at symmetrical positions within the homologous arms, yielding a 5'-phosphate and a 3'-hydroxyl group; requires a central core of homology in the junction. The consensus cleavage sequence is 5'-(A/T)TT(C/G)-3'. Cleavage occurs on the 3'-side of the TT dinucleotide at the point of strand exchange. HJ branch migration catalyzed by RuvA-RuvB allows RuvC to scan DNA until it finds its consensus sequence, where it cleaves and resolves the cruciform DNA. This is Crossover junction endodeoxyribonuclease RuvC from Chlamydia pneumoniae (Chlamydophila pneumoniae).